Here is a 247-residue protein sequence, read N- to C-terminus: Protein LIFEGUARD 4 (247 aa).

The next 7 helical transmembrane spans lie at 42-62 (VYSI…TVVF), 75-95 (AGLA…CPLY), 105-125 (YLLL…TCAF), 130-150 (VILE…VYTF), 165-185 (FLFG…FFPL), 188-208 (ISVM…IVYD), and 222-242 (IWAA…LLTI).

It belongs to the BI1 family.

The protein resides in the membrane. This is Protein LIFEGUARD 4 from Arabidopsis thaliana (Mouse-ear cress).